Reading from the N-terminus, the 655-residue chain is Putative calcium up-regulated protein J (655 aa).

Residues 40 to 181 (KSRAMLKGDN…DNVCFQWDLE (142 aa)) form the Ricin B-type lectin domain.

The protein belongs to the cup family.

The sequence is that of Putative calcium up-regulated protein J (cupJ) from Dictyostelium discoideum (Social amoeba).